A 376-amino-acid polypeptide reads, in one-letter code: 3-aminomethylindole N-methyltransferase (376 aa).

S-adenosyl-L-homocysteine is bound by residues Gly-220, Asp-243, Asp-263, and Met-264.

The protein belongs to the class I-like SAM-binding methyltransferase superfamily. Cation-independent O-methyltransferase family. In terms of tissue distribution, more present in the fifth leaf than in the second leaf (at protein level).

It catalyses the reaction 3-(aminomethyl)indole + 2 S-adenosyl-L-methionine = gramine + 2 S-adenosyl-L-homocysteine + 2 H(+). It participates in alkaloid biosynthesis. Its activity is regulated as follows. Repressed by sodium carbonate, sodium bicarbonate and K-phosphate. In terms of biological role, methylates 3-aminomethylindole (AMI) and N-methyl-3-aminomethylindole (MAMI), two substrates involved in gramine biosynthesis, a toxic indole alkaloid. Can use S-adenosyl-L-methionine (AdoMet) as a methyl donor. Unable to mediate caffeic acid O-methylation. The polypeptide is 3-aminomethylindole N-methyltransferase (Hordeum vulgare subsp. vulgare (Domesticated barley)).